We begin with the raw amino-acid sequence, 289 residues long: tRNA dimethylallyltransferase (289 aa).

9–16 (GTTASGKT) is a binding site for ATP. Position 11-16 (11-16 (TASGKT)) interacts with substrate. Residues 34–37 (DSLC) form an interaction with substrate tRNA region.

It belongs to the IPP transferase family. Monomer. Mg(2+) is required as a cofactor.

It catalyses the reaction adenosine(37) in tRNA + dimethylallyl diphosphate = N(6)-dimethylallyladenosine(37) in tRNA + diphosphate. In terms of biological role, catalyzes the transfer of a dimethylallyl group onto the adenine at position 37 in tRNAs that read codons beginning with uridine, leading to the formation of N6-(dimethylallyl)adenosine (i(6)A). The sequence is that of tRNA dimethylallyltransferase from Campylobacter jejuni (strain RM1221).